Here is a 90-residue protein sequence, read N- to C-terminus: Probable Fe(2+)-trafficking protein (90 aa).

This sequence belongs to the Fe(2+)-trafficking protein family.

In terms of biological role, could be a mediator in iron transactions between iron acquisition and iron-requiring processes, such as synthesis and/or repair of Fe-S clusters in biosynthetic enzymes. This chain is Probable Fe(2+)-trafficking protein, found in Pasteurella multocida (strain Pm70).